We begin with the raw amino-acid sequence, 150 residues long: Ribonuclease K6 (150 aa).

The signal sequence occupies residues 1 to 23; it reads MVLCFPLLLLLLVLWGPVCPLHA. H38 functions as the Proton acceptor in the catalytic mechanism. Cystine bridges form between C46–C104, C60–C114, C78–C129, and C85–C92. N55 carries N-linked (GlcNAc...) asparagine glycosylation. Residues 61–65 and K86 each bind substrate; that span reads KHQNT. A glycan (N-linked (GlcNAc...) asparagine) is linked at N100. A substrate-binding site is contributed by R105. H145 serves as the catalytic Proton donor.

The protein belongs to the pancreatic ribonuclease family. As to quaternary structure, interacts (via N-terminus) with bacterial lipopolysaccharide (LPS).

Its subcellular location is the secreted. The protein localises to the lysosome. It is found in the cytoplasmic granule. In terms of biological role, ribonuclease which shows a preference for the pyrimidines uridine and cytosine. Has potent antibacterial activity against a range of Gram-positive and Gram-negative bacteria, including P.aeruginosa, A.baumanii, M.luteus, S.aureus, E.faecalis, E.faecium, S.saprophyticus and E.coli. Causes loss of bacterial membrane integrity, and also promotes agglutination of Gram-negative bacteria. Probably contributes to urinary tract sterility. Bactericidal activity is independent of RNase activity. The chain is Ribonuclease K6 (RNASE6) from Pongo pygmaeus (Bornean orangutan).